Here is a 210-residue protein sequence, read N- to C-terminus: Acyl-homoserine-lactone synthase (210 aa).

This sequence belongs to the autoinducer synthase family.

The enzyme catalyses a fatty acyl-[ACP] + S-adenosyl-L-methionine = an N-acyl-L-homoserine lactone + S-methyl-5'-thioadenosine + holo-[ACP] + H(+). Functionally, required for the synthesis of OHHL (N-(3-oxohexanoyl)-L-homoserine lactone), an autoinducer molecule which binds to EsaR. OHHL is necessary for biosynthesis of EPS virulence factor (extracellular heteropolysaccharide) which plays a role in the development of Stewart's wilt on sweet corn. The polypeptide is Acyl-homoserine-lactone synthase (esaI) (Pantoea stewartii subsp. stewartii (Erwinia stewartii)).